The primary structure comprises 249 residues: tRNA (guanine-N(7)-)-methyltransferase (249 aa).

S-adenosyl-L-methionine-binding residues include Glu-80, Glu-105, Asp-132, and Asp-155. Asp-155 is an active-site residue. Substrate is bound by residues Lys-159, Asp-191, and 228–231 (TKFE).

The protein belongs to the class I-like SAM-binding methyltransferase superfamily. TrmB family.

It carries out the reaction guanosine(46) in tRNA + S-adenosyl-L-methionine = N(7)-methylguanosine(46) in tRNA + S-adenosyl-L-homocysteine. The protein operates within tRNA modification; N(7)-methylguanine-tRNA biosynthesis. Catalyzes the formation of N(7)-methylguanine at position 46 (m7G46) in tRNA. In Mannheimia succiniciproducens (strain KCTC 0769BP / MBEL55E), this protein is tRNA (guanine-N(7)-)-methyltransferase.